The sequence spans 198 residues: Probable GTP-binding protein EngB (198 aa).

The 175-residue stretch at 21–195 (NFSEVAFLGR…EDIIIDQTLG (175 aa)) folds into the EngB-type G domain. Residues 29–36 (GRSNVGKS), 56–60 (GKTQL), 81–84 (DLPG), 151–154 (TKCD), and 174–176 (VSN) each bind GTP. Residues Ser36 and Thr58 each coordinate Mg(2+).

It belongs to the TRAFAC class TrmE-Era-EngA-EngB-Septin-like GTPase superfamily. EngB GTPase family. Requires Mg(2+) as cofactor.

Functionally, necessary for normal cell division and for the maintenance of normal septation. The chain is Probable GTP-binding protein EngB from Campylobacter jejuni subsp. jejuni serotype O:6 (strain 81116 / NCTC 11828).